Here is a 105-residue protein sequence, read N- to C-terminus: Met repressor (105 aa).

Belongs to the MetJ family. As to quaternary structure, homodimer.

It is found in the cytoplasm. Its function is as follows. This regulatory protein, when combined with SAM (S-adenosylmethionine) represses the expression of the methionine regulon and of enzymes involved in SAM synthesis. The polypeptide is Met repressor (Pasteurella multocida (strain Pm70)).